We begin with the raw amino-acid sequence, 565 residues long: Hemagglutinin-neuraminidase (565 aa).

Topologically, residues M1–T20 are intravirion. A helical membrane pass occupies residues L21–I41. Over Q42–S565 the chain is Virion surface. N-linked (GlcNAc...) asparagine; by host glycans are attached at residues N110 and N139. 3 disulfide bridges follow: C161/C185, C175/C236, and C227/C240. The segment at N223–S228 is involved in neuraminidase activity. A glycan (N-linked (GlcNAc...) asparagine; by host) is linked at N267. 3 disulfides stabilise this stretch: C333/C454, C365/C375, and C448/C458. A glycan (N-linked (GlcNAc...) asparagine; by host) is linked at N504. C528 and C539 form a disulfide bridge.

It belongs to the paramyxoviruses hemagglutinin-neuraminidase family. In terms of assembly, homotetramer; composed of disulfide-linked homodimers. Interacts with F protein trimer.

The protein localises to the virion membrane. The protein resides in the host cell membrane. The catalysed reaction is Hydrolysis of alpha-(2-&gt;3)-, alpha-(2-&gt;6)-, alpha-(2-&gt;8)- glycosidic linkages of terminal sialic acid residues in oligosaccharides, glycoproteins, glycolipids, colominic acid and synthetic substrates.. Functionally, attaches the virus to sialic acid-containing cell receptors and thereby initiating infection. Binding of HN protein to the receptor induces a conformational change that allows the F protein to trigger virion/cell membranes fusion. Neuraminidase activity ensures the efficient spread of the virus by dissociating the mature virions from the neuraminic acid containing glycoproteins. This chain is Hemagglutinin-neuraminidase (HN), found in Parainfluenza virus 5 (isolate Canine/CPI-) (PIV5).